The sequence spans 254 residues: Proteasome subunit alpha (254 aa).

Positions 232-254 (PEVDSSESSNEAEAGAEKGSGES) are disordered.

The protein belongs to the peptidase T1A family. The 20S proteasome core is composed of 14 alpha and 14 beta subunits that assemble into four stacked heptameric rings, resulting in a barrel-shaped structure. The two inner rings, each composed of seven catalytic beta subunits, are sandwiched by two outer rings, each composed of seven alpha subunits. The catalytic chamber with the active sites is on the inside of the barrel. Has a gated structure, the ends of the cylinder being occluded by the N-termini of the alpha-subunits. Is capped by the proteasome-associated ATPase, ARC.

It localises to the cytoplasm. Its pathway is protein degradation; proteasomal Pup-dependent pathway. The formation of the proteasomal ATPase ARC-20S proteasome complex, likely via the docking of the C-termini of ARC into the intersubunit pockets in the alpha-rings, may trigger opening of the gate for substrate entry. Interconversion between the open-gate and close-gate conformations leads to a dynamic regulation of the 20S proteasome proteolysis activity. In terms of biological role, component of the proteasome core, a large protease complex with broad specificity involved in protein degradation. This is Proteasome subunit alpha from Mycolicibacterium vanbaalenii (strain DSM 7251 / JCM 13017 / BCRC 16820 / KCTC 9966 / NRRL B-24157 / PYR-1) (Mycobacterium vanbaalenii).